We begin with the raw amino-acid sequence, 116 residues long: MNMITFMLLLSLTLSIILTTINFWLAQMNPDAEKLSPYECGFDPLGSARLPFSIRFFLVAILFLLFDLEIALLLPLPWAIQLSQPLLTLLWTSILLLLLTLGLVYEWIQGGLEWAE.

The next 3 helical transmembrane spans lie at 6–26 (FMLL…FWLA), 56–76 (FFLV…LLPL), and 85–105 (PLLT…GLVY).

This sequence belongs to the complex I subunit 3 family.

The protein resides in the mitochondrion membrane. The enzyme catalyses a ubiquinone + NADH + 5 H(+)(in) = a ubiquinol + NAD(+) + 4 H(+)(out). Core subunit of the mitochondrial membrane respiratory chain NADH dehydrogenase (Complex I) that is believed to belong to the minimal assembly required for catalysis. Complex I functions in the transfer of electrons from NADH to the respiratory chain. The immediate electron acceptor for the enzyme is believed to be ubiquinone. The polypeptide is NADH-ubiquinone oxidoreductase chain 3 (MT-ND3) (Struthio camelus (Common ostrich)).